The chain runs to 579 residues: Copine-E (579 aa).

2 consecutive C2 domains span residues 45 to 175 (IDPS…KVIG) and 183 to 304 (QTGT…EFTL). Asp-80, Asp-86, Asp-145, Asp-147, and Asp-153 together coordinate Ca(2+). A VWFA domain is found at 345-552 (NLMIAIDCTA…KKYENDPEQL (208 aa)).

It belongs to the copine family. The cofactor is Ca(2+).

The chain is Copine-E (cpnE) from Dictyostelium discoideum (Social amoeba).